Consider the following 112-residue polypeptide: uncharacterized protein (112 aa).

An HIT domain is found at 5-112 (IFQKIIKGII…LLGGKKLNKI (108 aa)). The short motif at 98-102 (HLHLH) is the Histidine triad motif element.

This is an uncharacterized protein from Buchnera aphidicola subsp. Baizongia pistaciae (strain Bp).